The following is a 402-amino-acid chain: CCA-adding enzyme (402 aa).

2 residues coordinate ATP: Gly-32 and Arg-35. Residues Gly-32 and Arg-35 each coordinate CTP. The Mg(2+) site is built by Asp-45 and Asp-47. 5 residues coordinate ATP: Arg-116, Asp-159, Arg-162, Arg-165, and Arg-168. CTP contacts are provided by Arg-116, Asp-159, Arg-162, Arg-165, and Arg-168.

It belongs to the tRNA nucleotidyltransferase/poly(A) polymerase family. Bacterial CCA-adding enzyme type 3 subfamily. As to quaternary structure, homodimer. The cofactor is Mg(2+).

The enzyme catalyses a tRNA precursor + 2 CTP + ATP = a tRNA with a 3' CCA end + 3 diphosphate. The catalysed reaction is a tRNA with a 3' CCA end + 2 CTP + ATP = a tRNA with a 3' CCACCA end + 3 diphosphate. In terms of biological role, catalyzes the addition and repair of the essential 3'-terminal CCA sequence in tRNAs without using a nucleic acid template. Adds these three nucleotides in the order of C, C, and A to the tRNA nucleotide-73, using CTP and ATP as substrates and producing inorganic pyrophosphate. tRNA 3'-terminal CCA addition is required both for tRNA processing and repair. Also involved in tRNA surveillance by mediating tandem CCA addition to generate a CCACCA at the 3' terminus of unstable tRNAs. While stable tRNAs receive only 3'-terminal CCA, unstable tRNAs are marked with CCACCA and rapidly degraded. In Streptococcus thermophilus (strain CNRZ 1066), this protein is CCA-adding enzyme.